Reading from the N-terminus, the 330-residue chain is Fructose-1,6-bisphosphatase class 1 (330 aa).

Glu84, Asp103, Leu105, and Asp106 together coordinate Mg(2+). Residues 106 to 109 (DGSS), Asn196, and Lys262 contribute to the substrate site. Mg(2+) is bound at residue Glu268.

The protein belongs to the FBPase class 1 family. Homotetramer. The cofactor is Mg(2+).

The protein resides in the cytoplasm. The catalysed reaction is beta-D-fructose 1,6-bisphosphate + H2O = beta-D-fructose 6-phosphate + phosphate. It participates in carbohydrate biosynthesis; gluconeogenesis. This is Fructose-1,6-bisphosphatase class 1 from Shewanella frigidimarina (strain NCIMB 400).